The chain runs to 75 residues: Conotoxin VnMKLT2-012 (75 aa).

A signal peptide spans 1–23; the sequence is MMKLTCVLIIAVLFLTACQLTTA. A propeptide spanning residues 24-45 is cleaved from the precursor; it reads ETRDEYRAVRSSDEVRNSRSTR. A compositionally biased stretch (basic and acidic residues) spans 31 to 45; it reads AVRSSDEVRNSRSTR. A disordered region spans residues 31-50; the sequence is AVRSSDEVRNSRSTRDCSGS. Disulfide bonds link cysteine 47/cysteine 60, cysteine 54/cysteine 65, and cysteine 59/cysteine 74.

The protein belongs to the conotoxin O1 superfamily. In terms of tissue distribution, expressed by the venom duct.

It is found in the secreted. The chain is Conotoxin VnMKLT2-012 from Conus ventricosus (Mediterranean cone).